A 472-amino-acid chain; its full sequence is DNA-cytosine methyltransferase (472 aa).

The region spanning 87–457 (FRFIDLFAGI…KLLEPKIKQA (371 aa)) is the SAM-dependent MTase C5-type domain. Cys177 is an active-site residue.

It belongs to the class I-like SAM-binding methyltransferase superfamily. C5-methyltransferase family.

It catalyses the reaction a 2'-deoxycytidine in DNA + S-adenosyl-L-methionine = a 5-methyl-2'-deoxycytidine in DNA + S-adenosyl-L-homocysteine + H(+). Its function is as follows. This methylase recognizes the double-stranded sequence 5'-CCWGG-3', methylates C-2 on both strands. This Escherichia coli O157:H7 protein is DNA-cytosine methyltransferase (dcm).